A 355-amino-acid chain; its full sequence is S-adenosylmethionine:tRNA ribosyltransferase-isomerase (355 aa).

This sequence belongs to the QueA family. Monomer.

Its subcellular location is the cytoplasm. It carries out the reaction 7-aminomethyl-7-carbaguanosine(34) in tRNA + S-adenosyl-L-methionine = epoxyqueuosine(34) in tRNA + adenine + L-methionine + 2 H(+). It participates in tRNA modification; tRNA-queuosine biosynthesis. Its function is as follows. Transfers and isomerizes the ribose moiety from AdoMet to the 7-aminomethyl group of 7-deazaguanine (preQ1-tRNA) to give epoxyqueuosine (oQ-tRNA). This chain is S-adenosylmethionine:tRNA ribosyltransferase-isomerase, found in Pectobacterium carotovorum subsp. carotovorum (strain PC1).